A 570-amino-acid chain; its full sequence is Nucleoprotein (570 aa).

The segment at 54 to 241 (MRKQKRDDGD…IDTKKSSLNI (188 aa)) is binding site for the cap structure m7GTP. 2 residues coordinate Mn(2+): aspartate 390 and glutamate 392. Zn(2+)-binding residues include glutamate 400, cysteine 507, histidine 510, and cysteine 530. Aspartate 534 serves as a coordination point for Mn(2+).

This sequence belongs to the arenaviridae nucleocapsid protein family. In terms of assembly, homomultimerizes to form the nucleocapsid. Binds to viral genomic RNA. Interacts with glycoprotein G2. Interacts with protein Z; this interaction probably directs the encapsidated genome to budding sites. Interacts with protein L; this interaction does not interfere with Z-L interaction. Interacts with host IKBKE (via Protein kinase domain); the interaction inhibits IKBKE kinase activity.

It localises to the virion. Its subcellular location is the host cytoplasm. Functionally, encapsidates the genome, protecting it from nucleases. The encapsidated genomic RNA is termed the nucleocapsid (NC). Serves as template for viral transcription and replication. The increased presence of protein N in host cell does not seem to trigger the switch from transcription to replication as observed in other negative strain RNA viruses. Through the interaction with host IKBKE, strongly inhibits the phosphorylation and nuclear translocation of host IRF3, a protein involved in interferon activation pathway, leading to the inhibition of interferon-beta and IRF3-dependent promoters activation. Also encodes a functional 3'-5' exoribonuclease that degrades preferentially dsRNA substrates and thereby participates in the suppression of interferon induction. In Homo sapiens (Human), this protein is Nucleoprotein.